The sequence spans 664 residues: Transketolase 1 (664 aa).

Residue His26 coordinates substrate. Residues His66 and 114 to 116 each bind thiamine diphosphate; that span reads GPL. Mg(2+) is bound at residue Asp155. Residues Gly156 and Asn185 each coordinate thiamine diphosphate. Mg(2+)-binding residues include Asn185 and Ile187. The substrate site is built by His260, Arg357, and Ser384. Thiamine diphosphate is bound at residue His260. Glu411 serves as the catalytic Proton donor. Position 437 (Phe437) interacts with thiamine diphosphate. The substrate site is built by His461, Asp469, and Arg520.

It belongs to the transketolase family. Homodimer. Requires Mg(2+) as cofactor. Ca(2+) serves as cofactor. It depends on Mn(2+) as a cofactor. The cofactor is Co(2+). Thiamine diphosphate is required as a cofactor.

It carries out the reaction D-sedoheptulose 7-phosphate + D-glyceraldehyde 3-phosphate = aldehydo-D-ribose 5-phosphate + D-xylulose 5-phosphate. In terms of biological role, catalyzes the transfer of a two-carbon ketol group from a ketose donor to an aldose acceptor, via a covalent intermediate with the cofactor thiamine pyrophosphate. In Aliivibrio fischeri (strain ATCC 700601 / ES114) (Vibrio fischeri), this protein is Transketolase 1 (tkt1).